Here is a 302-residue protein sequence, read N- to C-terminus: Zinc transporter ZIP1 (302 aa).

Residues 1–6 (MDYLLQ) are Extracellular-facing. A helical membrane pass occupies residues 7–27 (VKVGALVGLLLLTLFFGFIPA). Residues 28–44 (RMKWFHVTGGTELHKAV) are Cytoplasmic-facing. The helical transmembrane segment at 45–65 (LSFVSCFAGGVFLSACLLDII) threads the bilayer. The Extracellular portion of the chain corresponds to 66–86 (PDYLSDIHGELQKRDLDDGFP). The helical transmembrane segment at 87–107 (LPEFIMACGFFTVLILEKMVL) threads the bilayer. The Cytoplasmic portion of the chain corresponds to 108–158 (SCTEGHRNEETAPLLAPAAPNGHAHGHPSVNDLEGSGHHVHVDFHAHSSFR). A helical membrane pass occupies residues 159–179 (SFMLFLSLSLHSVFEGLAIGL). Over 180-185 (QTTNAK) the chain is Extracellular. The chain crosses the membrane as a helical span at residues 186–206 (VLEICIAILVHKSIIVFSLSV). Topologically, residues 207–219 (KLVQSAVKPLWVV) are cytoplasmic. A helical membrane pass occupies residues 220–240 (LYVTVFAIMSPLGIGIGIVVI). Residues 241-247 (ETERQAG) lie on the Extracellular side of the membrane. A helical membrane pass occupies residues 248 to 268 (GLIQAVLEGLAAGTFIYITFL). Over 269–281 (EILPHELNSSERP) the chain is Cytoplasmic. The chain crosses the membrane as a helical span at residues 282 to 302 (LLKVLFLLCGFSIMAALCFLG).

Belongs to the ZIP transporter (TC 2.A.5) family. In terms of tissue distribution, ubiquitous. Highest levels in ovary, high levels in heart, eye, kidney and brain, moderate levels in intestine and low levels in gill and skin.

The protein localises to the cell membrane. It is found in the endoplasmic reticulum membrane. It carries out the reaction Zn(2+)(in) = Zn(2+)(out). In terms of biological role, transporter for the divalent cation Zn(2+). Mediates the influx of Zn(2+) into cells from extracellular space. This is Zinc transporter ZIP1 (slc39a1) from Danio rerio (Zebrafish).